Reading from the N-terminus, the 147-residue chain is MADFDMVLKCWGPVEADHATHGSLVLTRLFTEHPETLKLFPKFAGIAHGDLAGDAGVSAHGATVLKKLGDLLKARGGHAALLKPLSSSHATKHKIPIINFKLIAEVIGKVMEEKAGLDAAGQTALRNVMAIIITDMEADYKELGFTE.

One can recognise a Globin domain in the interval 2–141 (ADFDMVLKCW…IITDMEADYK (140 aa)). Position 60 (H60) interacts with nitrite. H60 provides a ligand contact to O2. Residue H89 participates in heme b binding.

It belongs to the globin family. In terms of assembly, monomeric.

Its subcellular location is the cytoplasm. It localises to the sarcoplasm. The enzyme catalyses Fe(III)-heme b-[protein] + nitric oxide + H2O = Fe(II)-heme b-[protein] + nitrite + 2 H(+). The catalysed reaction is H2O2 + AH2 = A + 2 H2O. Its function is as follows. Monomeric heme protein which primary function is to store oxygen and facilitate its diffusion within muscle tissues. Reversibly binds oxygen through a pentacoordinated heme iron and enables its timely and efficient release as needed during periods of heightened demand. Depending on the oxidative conditions of tissues and cells, and in addition to its ability to bind oxygen, it also has a nitrite reductase activity whereby it regulates the production of bioactive nitric oxide. Under stress conditions, like hypoxia and anoxia, it also protects cells against reactive oxygen species thanks to its pseudoperoxidase activity. The protein is Myoglobin (mb) of Channichthys rhinoceratus (Unicorn icefish).